The primary structure comprises 409 residues: Pentatricopeptide repeat-containing protein At1g01970 (409 aa).

PPR repeat units follow at residues 164 to 198, 199 to 233, 234 to 268, 269 to 303, 304 to 338, and 339 to 373; these read NARD…GFLI, DQVT…GEPL, DYRS…EICA, GREV…GITP, DVKL…GIKA, and TDKC…SIML.

This sequence belongs to the PPR family. P subfamily.

In Arabidopsis thaliana (Mouse-ear cress), this protein is Pentatricopeptide repeat-containing protein At1g01970.